The chain runs to 501 residues: Inactive cytidine monophosphate-N-acetylneuraminic acid hydroxylase (501 aa).

It belongs to the CMP-Neu5Ac hydroxylase family. As to expression, widely expressed. Highly expressed in thymus. Not expressed in brain. May be expressed in adult stem cells (at protein level).

The protein localises to the cytoplasm. Functionally, sialic acids are components of carbohydrate chains of glycoconjugates and are involved in cell-cell recognition and cell-pathogen interactions. That protein has no CMP-N-acetylneuraminate monooxygenase activity and is not able to convert CMP-N-acetylneuraminic acid (CMP-Neu5Ac) into its hydroxylated derivative CMP-N-glycolylneuraminic acid (CMP-Neu5Gc), a sialic acid abundantly expressed at the surface of many cells in vertebrates. However, it may play a role in Wnt signaling. The polypeptide is Inactive cytidine monophosphate-N-acetylneuraminic acid hydroxylase (CMAHP) (Homo sapiens (Human)).